A 210-amino-acid polypeptide reads, in one-letter code: Ribosomal RNA large subunit methyltransferase E (210 aa).

Residues Gly61, Trp63, Asp81, Asp97, and Asp122 each coordinate S-adenosyl-L-methionine. Residue Lys162 is the Proton acceptor of the active site.

The protein belongs to the class I-like SAM-binding methyltransferase superfamily. RNA methyltransferase RlmE family.

The protein resides in the cytoplasm. The enzyme catalyses uridine(2552) in 23S rRNA + S-adenosyl-L-methionine = 2'-O-methyluridine(2552) in 23S rRNA + S-adenosyl-L-homocysteine + H(+). Functionally, specifically methylates the uridine in position 2552 of 23S rRNA at the 2'-O position of the ribose in the fully assembled 50S ribosomal subunit. This chain is Ribosomal RNA large subunit methyltransferase E, found in Xanthomonas oryzae pv. oryzae (strain MAFF 311018).